A 187-amino-acid polypeptide reads, in one-letter code: 5-hmdU DNA kinase (187 aa).

The protein belongs to the thymidylate kinase family. 5-hmdU DNA kinase subfamily.

The catalysed reaction is 5-hydroxymethyl-dUMP in DNA + ATP = 5-phosphomethyl-dUMP in DNA + ADP + H(+). Functionally, phosphorylates 5-hydroxymethyluracil (5hmdU) into 5-phosphomethyl-2'-deoxyuridine (5-PmdU) on DNA as a step in the pathway leading to thymidine hypermodifications in the viral genome. The phosphate is added internally to the DNA polymer. Also transfers glutamate to 5-pyrophosphoryloxymethyldeoxyuridine (5-PPmdU) to produce 5-Nalpha-glyutamylthymidine (Nalpha-GluT). As a final result of the pathway of hypermodification, 5-aminoethyl-2'-deoxyuridine (5-NedU) substitutes for about 30% of thymidines in the viral DNA. These modifications probably prevent degradation of viral genome by the host restriction-modification antiviral defense system. This is 5-hmdU DNA kinase from Pseudomonas phage M6.